A 62-amino-acid polypeptide reads, in one-letter code: Large ribosomal subunit protein bL28 (62 aa).

Residues 1-26 are disordered; sequence MARKCYVTGKSPKSGNNRSHALNKTK. Over residues 11–20 the composition is skewed to polar residues; it reads SPKSGNNRSH.

Belongs to the bacterial ribosomal protein bL28 family.

This chain is Large ribosomal subunit protein bL28, found in Exiguobacterium sp. (strain ATCC BAA-1283 / AT1b).